A 371-amino-acid chain; its full sequence is Putative HAD-like hydrolase Noc_2718 (371 aa).

Residues 1-288 form an HAD-like hydrolase region; the sequence is MKQKILLCSD…TGREESAEEE (288 aa). Residues 291 to 371 enclose the YcgL domain; that stretch reads QSCAIYRSCK…QLSSREYRRS (81 aa).

It in the N-terminal section; belongs to the HAD-like hydrolase superfamily.

This is Putative HAD-like hydrolase Noc_2718 from Nitrosococcus oceani (strain ATCC 19707 / BCRC 17464 / JCM 30415 / NCIMB 11848 / C-107).